The chain runs to 420 residues: Zinc finger protein Pegasus (420 aa).

Residue Lys5 forms a Glycyl lysine isopeptide (Lys-Gly) (interchain with G-Cter in SUMO2) linkage. C2H2-type zinc fingers lie at residues 82-104 (LKCR…IRIH), 110-132 (HRCH…MRSH), and 138-161 (YKCE…RRKH). Lys185 participates in a covalent cross-link: Glycyl lysine isopeptide (Lys-Gly) (interchain with G-Cter in SUMO2). Composition is skewed to polar residues over residues 223–236 (QTDS…TTPT) and 262–273 (LSSLPPENQNPA). Disordered regions lie at residues 223-247 (QTDS…QELM) and 262-356 (LSSL…PALP). Over residues 290–311 (QPSTQAVVSAVSASIPQSSSPT) the composition is skewed to low complexity. Over residues 332-349 (SEPSAHTSTPSIGNSQPS) the composition is skewed to polar residues. The segment at 364–387 (HHCQHCDMYFFADNILYTIHMGCH) adopts a C2H2-type 4; degenerate zinc-finger fold. Residues 393–417 (FQCNICGCKCKNKYDFACHFARGQH) form a C2H2-type 5 zinc finger.

It belongs to the Ikaros C2H2-type zinc-finger protein family. In terms of assembly, self-associates. Interacts with other family members; IKZF1, IKZF2, IKZF3 and IKZF4.

The protein resides in the nucleus. Functionally, transcriptional repressor that binds the core 5'GNNTGTNG-3' DNA consensus sequence. Involved in megakaryocyte differentiation. This chain is Zinc finger protein Pegasus (IKZF5), found in Pongo abelii (Sumatran orangutan).